A 481-amino-acid polypeptide reads, in one-letter code: Acetyltransferase peniE (481 aa).

Active-site proton acceptor residues include His-164 and Asp-411.

This sequence belongs to the plant acyltransferase family. Monomer.

Its function is as follows. Acetyltransferase; part of the gene cluster that mediates the biosynthesis of penifulvin A, a potent insecticidal sesquiterpene that features a [5.5.5.6]dioxafenestrane ring. The first step of the pathway is performed by the sesquiterpene cyclase peniA that generates the angular triquinane scaffold silphinene via cyclization of the linear farnesyl pyrophosphate (FPP). The cytochrome P450 monooxygenase peniB and the flavin-dependent monooxygenase peniC then catalyze a series of oxidation reactions to transform silphinene into penifulvin A. The dioxygenases peniD and peniF, as well as the acetyltransferase peniE, do not seem to be involved in the biosynthesis of penifulvin A. This Penicillium patulum (Penicillium griseofulvum) protein is Acetyltransferase peniE.